The following is a 267-amino-acid chain: MAKVPDLFEDLKNCFSENEEYSSAIDHLSLNQKSFYDASYEPLHEDCMNKVVSLSTSETSVSPNLTFQENVVAVTASGKILKKRRLSLNQPITDVDLETNVSDPEEGIIKPRSVPYTFQRNMRYKYLRIIKQEFTLNDALNQSLVRDTSDQYLRAAPLQNLGDAVKFDMGVYMTSEDSILPVTLRISQTPLFVSAQNEDEPVLLKEMPETPRIITDSESDILFFWETQGNKNYFKSAANPQLFIATKPEHLVHMARGLPSMTDFQIS.

The propeptide occupies 1-112 (MAKVPDLFED…DPEEGIIKPR (112 aa)). Asparagine 64 carries an N-linked (GlcNAc...) asparagine glycan. An N6-acetyllysine modification is found at lysine 82. The tract at residues 82–86 (KKRRL) is nuclear localization signal (NLS). A Phosphoserine modification is found at serine 87. N-linked (GlcNAc...) asparagine glycans are attached at residues asparagine 100 and asparagine 141.

It belongs to the IL-1 family. As to quaternary structure, monomer. Interacts with TMED10; the interaction mediates the translocation from the cytoplasm into the ERGIC (endoplasmic reticulum-Golgi intermediate compartment) and thereby secretion. Interacts with IL1R1. Interacts with S100A13; this interaction is the first step in the export of IL1A, followed by direct translocation of this complex across the plasma membrane. Post-translationally, acetylated within its nuclear localization sequence, which impacts subcellular localization. In terms of processing, proteolytic processed by CAPN1 in a calcium-dependent manner. Cleavage from 31 kDa precursor to 18 kDa biologically active molecules. Phosphorylated. Phosphorylation greatly enhances susceptibility to digestion and promotes the conversion of pre-IL1A alpha to the biologically active IL1A.

The protein localises to the nucleus. Its subcellular location is the cytoplasm. It localises to the secreted. Its function is as follows. Cytokine constitutively present intracellularly in nearly all resting non-hematopoietic cells that plays an important role in inflammation and bridges the innate and adaptive immune systems. After binding to its receptor IL1R1 together with its accessory protein IL1RAP, forms the high affinity interleukin-1 receptor complex. Signaling involves the recruitment of adapter molecules such as MYD88, IRAK1 or IRAK4. In turn, mediates the activation of NF-kappa-B and the three MAPK pathways p38, p42/p44 and JNK pathways. Within the cell, acts as an alarmin and cell death results in its liberation in the extracellular space after disruption of the cell membrane to induce inflammation and alert the host to injury or damage. In addition to its role as a danger signal, which occurs when the cytokine is passively released by cell necrosis, directly senses DNA damage and acts as signal for genotoxic stress without loss of cell integrity. The protein is Interleukin-1 alpha (IL1A) of Oryctolagus cuniculus (Rabbit).